The sequence spans 997 residues: Chromosomal passenger complex protein bir1 (997 aa).

BIR repeat units lie at residues 25–99 (RLDT…PWAY) and 120–194 (REQT…VFFT). Positions 163, 166, 183, and 190 each coordinate Zn(2+). 5 disordered regions span residues 217–329 (EDLT…FSKG), 370–527 (TVSD…ENDE), 682–701 (TRDV…NHEE), 755–782 (SPKL…EKEA), and 817–838 (RTSV…ETKV). The segment covering 240–252 (TLNFSPSRKNNLN) has biased composition (polar residues). Over residues 288–299 (PRRKNKSPKKSK) the composition is skewed to basic residues. The segment covering 311 to 320 (SDEDEDDDDL) has biased composition (acidic residues). Positions 370-392 (TVSDITGHQSVTDESDEQNNCMS) are enriched in polar residues. Residues 408-423 (SVVSKSKEISSSVSSV) show a composition bias toward low complexity. Residues 426–451 (EQNHTEKQVAIETPEQQKVEKEDEHL) show a composition bias toward basic and acidic residues. Polar residues-rich tracts occupy residues 463–476 (KQPI…SSPD) and 485–512 (RVSS…FSNI). Polar residues predominate over residues 756 to 772 (PKLQSKNNQTVEAVNTE). The span at 773–782 (TSDKLQEKEA) shows a compositional bias: basic and acidic residues. The segment covering 817-830 (RTSVQNGTRSVSKN) has biased composition (polar residues).

In terms of assembly, component of the CPC complex at least composed of ark1, bir1 and pic1. Interacts with the mitotic checkpoint complex (MCC) subunit mad3. Post-translationally, phosphorylated by ark1.

Its subcellular location is the nucleus. The protein resides in the cytoplasm. It is found in the cytoskeleton. The protein localises to the spindle. It localises to the chromosome. Its subcellular location is the centromere. In terms of biological role, component of the chromosomal passenger complex (CPC), a complex that acts as a key regulator of chromosome segregation and cytokinesis. Has a role in chromosome segregation by recruiting condensin and ark1 kinase to appropriate sites as the cell progresses through mitosis. Ark1 activity depends upon bir1 function and phosphorylation. Ark1 with bir1 function is required for full-scale association with kinetochores and formation of a complex with mad3. The chain is Chromosomal passenger complex protein bir1 (bir1) from Schizosaccharomyces pombe (strain 972 / ATCC 24843) (Fission yeast).